We begin with the raw amino-acid sequence, 328 residues long: Malate dehydrogenase (328 aa).

12 to 18 (GAAGQIA) provides a ligand contact to NAD(+). R93 and R99 together coordinate substrate. NAD(+) is bound by residues N106, Q113, and 130–132 (VGN). Substrate-binding residues include N132 and R163. H188 serves as the catalytic Proton acceptor.

The protein belongs to the LDH/MDH superfamily. MDH type 2 family.

The enzyme catalyses (S)-malate + NAD(+) = oxaloacetate + NADH + H(+). Its function is as follows. Catalyzes the reversible oxidation of malate to oxaloacetate. This chain is Malate dehydrogenase, found in Burkholderia cenocepacia (strain HI2424).